Consider the following 510-residue polypeptide: Zinc finger protein 692 (510 aa).

Disordered regions lie at residues Met1 to Asp20 and Trp121 to Ala306. Ser161 is modified (phosphoserine). The segment covering Cys163–Met172 has biased composition (basic and acidic residues). The span at Glu188–Leu201 shows a compositional bias: acidic residues. Ser225 bears the Phosphoserine mark. Low complexity predominate over residues Ala237–Val265. The span at Gln278–Leu297 shows a compositional bias: polar residues. C2H2-type zinc fingers lie at residues Leu322–His347, Phe353–His377, Tyr383–His405, Leu411–His433, and Phe442–His465. Phosphoserine is present on Ser464.

This sequence belongs to the krueppel C2H2-type zinc-finger protein family. Phosphorylation at Ser-464 results in loss of DNA-binding activity.

It is found in the nucleus. Functionally, may act as an transcriptional repressor for PCK1 gene expression, in turn may participate in the hepatic gluconeogenesis regulation through the activated AMPK signaling pathway. The protein is Zinc finger protein 692 of Bos taurus (Bovine).